A 196-amino-acid chain; its full sequence is Peroxiredoxin TSA1 (196 aa).

Positions 3 to 161 (AQVQKQAPTF…ALRLVEAFQW (159 aa)) constitute a Thioredoxin domain. A Glycyl lysine isopeptide (Lys-Gly) (interchain with G-Cter in ubiquitin) cross-link involves residue K14. 45-47 (TFV) contributes to the substrate binding site. Catalysis depends on C48, which acts as the Cysteine sulfenic acid (-SOH) intermediate. Residue K89 forms a Glycyl lysine isopeptide (Lys-Gly) (interchain with G-Cter in ubiquitin) linkage. R124 contributes to the substrate binding site. K132 participates in a covalent cross-link: Glycyl lysine isopeptide (Lys-Gly) (interchain with G-Cter in ubiquitin). T174 bears the Phosphothreonine mark.

It belongs to the peroxiredoxin family. AhpC/Prx1 subfamily. Homodimer; disulfide-linked, upon oxidation. Interacts with YAP1 via transient disulfide linkages. In terms of processing, the enzyme can be inactivated by further oxidation of the cysteine sulfenic acid (C(P)-SOH) to sulphinic acid (C(P)-SO2H) instead of its condensation to a disulfide bond. It can be reactivated by forming a transient disulfide bond with sulfiredoxin SRX1, which reduces the cysteine sulfinic acid in an ATP- and Mg-dependent manner.

It is found in the cytoplasm. It carries out the reaction a hydroperoxide + [thioredoxin]-dithiol = an alcohol + [thioredoxin]-disulfide + H2O. Functionally, thiol-specific peroxidase that catalyzes the reduction of hydrogen peroxide and organic hydroperoxides to water and alcohols, respectively. Plays a role in cell protection against oxidative stress by detoxifying peroxides and as sensor of hydrogen peroxide-mediated signaling events. Protects the cell against the oxidative stress caused by nascent-protein misfolding and aggregation. Relays hydrogen peroxide as a signal to the transcription factor YAP1 by inducing the formation of intramolecular disulfide bonds in YAP1, which causes its nuclear accumulation and activation. Can act alternatively as peroxidase and molecular chaperone. Oxidative stress and heat shock exposure cause a reversible shift of the protein structure from low MW species to high MW complexes, triggering a peroxidase-to-chaperone functional switch. The chaperone function of the protein enhances resistance to heat shock. This Saccharomyces cerevisiae (strain ATCC 204508 / S288c) (Baker's yeast) protein is Peroxiredoxin TSA1.